The chain runs to 212 residues: uncharacterized protein (212 aa).

S-adenosyl-L-methionine is bound by residues glycine 53, glutamate 74, and aspartate 97.

This sequence belongs to the methyltransferase superfamily. YrrT family.

Could be a S-adenosyl-L-methionine-dependent methyltransferase. This is an uncharacterized protein from Bacillus cytotoxicus (strain DSM 22905 / CIP 110041 / 391-98 / NVH 391-98).